The following is a 160-amino-acid chain: Protein shisa-like-2B (160 aa).

The chain crosses the membrane as a helical span at residues 65–85 (IGALIGLGIAALVLLAFVISV).

It belongs to the shisa family.

It is found in the membrane. This is Protein shisa-like-2B from Homo sapiens (Human).